The chain runs to 604 residues: Serine/threonine-protein kinase A-Raf (604 aa).

Residues 19 to 91 (GTVKVYLPNK…DGEELIVEVL (73 aa)) form the RBD domain. Residues 98 to 144 (MHNFVRKTFFSLAFCDFCLKFLFHGFRCQTCGYKFHQHCSSKVPTVC) form a Phorbol-ester/DAG-type zinc finger. Residues histidine 99, cysteine 112, cysteine 115, cysteine 125, cysteine 128, histidine 133, cysteine 136, and cysteine 144 each contribute to the Zn(2+) site. Serine 157 and serine 162 each carry phosphoserine. Disordered stretches follow at residues 177 to 222 (NELL…HMVS) and 241 to 288 (TDAA…EKKK). Threonine 181 bears the Phosphothreonine mark. Residue serine 186 is modified to Phosphoserine. Residues 210–222 (IRSTSTPNVHMVS) show a composition bias toward polar residues. The span at 252–265 (PRGSPSPASVSSGR) shows a compositional bias: low complexity. A phosphoserine mark is found at serine 255 and serine 267. Positions 272 to 287 (LPSEQRERKSLADEKK) are enriched in basic and acidic residues. The Protein kinase domain maps to 308 to 568 (VQLLKRIGTG…PQILATIELL (261 aa)). ATP-binding positions include 314 to 322 (IGTGSFGTV) and lysine 334. At threonine 316 the chain carries Phosphothreonine. Aspartate 427 acts as the Proton acceptor in catalysis.

The protein belongs to the protein kinase superfamily. TKL Ser/Thr protein kinase family. RAF subfamily. Interacts with TH1L/NELFD. Requires Zn(2+) as cofactor. Post-translationally, dephosphorylation by the SHOC2-MRAS-PP1c (SMP) complex consisting of SHOC2, GTP-bound M-Ras/MRAS and the catalytic subunit of protein phosphatase 1 (PPP1CA, PPP1CB or PPP1CC); this relieves inactivation and stimulates kinase activity.

It carries out the reaction L-seryl-[protein] + ATP = O-phospho-L-seryl-[protein] + ADP + H(+). It catalyses the reaction L-threonyl-[protein] + ATP = O-phospho-L-threonyl-[protein] + ADP + H(+). Its function is as follows. Involved in the transduction of mitogenic signals from the cell membrane to the nucleus. May also regulate the TOR signaling cascade. Phosphorylates PFKFB2. This Mus musculus (Mouse) protein is Serine/threonine-protein kinase A-Raf (Araf).